The sequence spans 638 residues: Neuroendocrine convertase 2 (638 aa).

Residues Met-1–Ala-25 form the signal peptide. A propeptide spanning residues Glu-26–Arg-109 is cleaved from the precursor. The Peptidase S8 domain occupies Gln-129 to Val-453. Active-site charge relay system residues include Asp-167 and His-208. 2 cysteine pairs are disulfide-bonded: Cys-225-Cys-376 and Cys-317-Cys-347. An N-linked (GlcNAc...) asparagine glycan is attached at Asn-375. Residue Ser-384 is the Charge relay system of the active site. The region spanning Thr-461–Ala-597 is the P/Homo B domain. The cysteines at positions 468 and 494 are disulfide-linked. Asn-514 and Asn-524 each carry an N-linked (GlcNAc...) asparagine glycan.

The protein belongs to the peptidase S8 family. Furin subfamily.

Its subcellular location is the cytoplasmic vesicle. It is found in the secretory vesicle. The protein resides in the secreted. The enzyme catalyses Release of protein hormones and neuropeptides from their precursors, generally by hydrolysis of -Lys-Arg-|- bonds.. Serine endopeptidase which is involved in the processing of hormone and other protein precursors at sites comprised of pairs of basic amino acid residues. Responsible for the release of glucagon from proglucagon in pancreatic A cells. This Pongo abelii (Sumatran orangutan) protein is Neuroendocrine convertase 2 (PCSK2).